The primary structure comprises 91 residues: ATP synthase subunit c (91 aa).

A run of 2 helical transmembrane segments spans residues 4 to 24 (FTMC…GTGI) and 53 to 73 (IGLA…LIIL).

Belongs to the ATPase C chain family. In terms of assembly, F-type ATPases have 2 components, F(1) - the catalytic core - and F(0) - the membrane proton channel. F(1) has five subunits: alpha(3), beta(3), gamma(1), delta(1), epsilon(1). F(0) has three main subunits: a(1), b(2) and c(10-14). The alpha and beta chains form an alternating ring which encloses part of the gamma chain. F(1) is attached to F(0) by a central stalk formed by the gamma and epsilon chains, while a peripheral stalk is formed by the delta and b chains.

The protein resides in the cell inner membrane. Its function is as follows. F(1)F(0) ATP synthase produces ATP from ADP in the presence of a proton or sodium gradient. F-type ATPases consist of two structural domains, F(1) containing the extramembraneous catalytic core and F(0) containing the membrane proton channel, linked together by a central stalk and a peripheral stalk. During catalysis, ATP synthesis in the catalytic domain of F(1) is coupled via a rotary mechanism of the central stalk subunits to proton translocation. Functionally, key component of the F(0) channel; it plays a direct role in translocation across the membrane. A homomeric c-ring of between 10-14 subunits forms the central stalk rotor element with the F(1) delta and epsilon subunits. The protein is ATP synthase subunit c of Geotalea uraniireducens (strain Rf4) (Geobacter uraniireducens).